We begin with the raw amino-acid sequence, 635 residues long: Ligand-gated ion channel 4 (635 aa).

The N-terminal stretch at 1 to 24 is a signal peptide; sequence MIICYSCLTVSILLTIKFVPCRFA. Topologically, residues 25-324 are extracellular; that stretch reads GIEHQNTKSR…IHMHRRPLFY (300 aa). Residues asparagine 46, asparagine 139, asparagine 177, and asparagine 225 are each glycosylated (N-linked (GlcNAc...) asparagine). An intrachain disulfide couples cysteine 238 to cysteine 252. Residue asparagine 282 is glycosylated (N-linked (GlcNAc...) asparagine). Transmembrane regions (helical) follow at residues 325–345, 355–375, and 381–401; these read VFNH…GFLM, MIIT…ESIP, and VPLI…ATCV. At 402–599 the chain is on the cytoplasmic side; that stretch reads NVITLNMHRN…QQLASVVDRL (198 aa). A helical membrane pass occupies residues 600-620; sequence LLCLFCTATLFTIICLLIVPV. A glycan (N-linked (GlcNAc...) asparagine) is linked at asparagine 625.

This sequence belongs to the ligand-gated ion channel (TC 1.A.9) family.

It localises to the postsynaptic cell membrane. The protein localises to the cell membrane. Possible acetylcholine receptor. The polypeptide is Ligand-gated ion channel 4 (lgc-4) (Caenorhabditis elegans).